The primary structure comprises 319 residues: MSRNEEQYLNLARRILETGASKMDRTKTGTHSIFGAQMRFDLSEGFPLLTSKKVAFGRIKSELLWFLRGDNNIRFLLQHHNHIWDEWPFKKWVESNEYKGPDMTDFGLRTQKDPIFAEQYKEQKKIFVDRILNDDEFSKKFGTIGDVYGKLWRHWPDANDDGSVDQITRLINEIKVNPNSRRLILTAWDPETTPFATLPSCHVMSQFYVVDGKISLQMYQRSADYFLGVPFNIASYSLLLSMVAAQTGLEVGEFIHTIGDAHIYNNHVDQIKEQLSKPTHKLPTLKLNPDVKSIFDYEMSDIKLENYIHEDVIKAPIAV.

DUMP contacts are provided by residues arginine 25 and 181–182; that span reads RR. The Nucleophile role is filled by cysteine 201. Residues 221-224, asparagine 232, and 262-264 contribute to the dUMP site; these read RSAD and HIY. Aspartate 224 contacts (6R)-5,10-methylene-5,6,7,8-tetrahydrofolate. Alanine 318 is a binding site for (6R)-5,10-methylene-5,6,7,8-tetrahydrofolate.

This sequence belongs to the thymidylate synthase family. Bacterial-type ThyA subfamily. In terms of assembly, homodimer.

It is found in the cytoplasm. The enzyme catalyses dUMP + (6R)-5,10-methylene-5,6,7,8-tetrahydrofolate = 7,8-dihydrofolate + dTMP. It functions in the pathway pyrimidine metabolism; dTTP biosynthesis. Its function is as follows. Catalyzes the reductive methylation of 2'-deoxyuridine-5'-monophosphate (dUMP) to 2'-deoxythymidine-5'-monophosphate (dTMP) while utilizing 5,10-methylenetetrahydrofolate (mTHF) as the methyl donor and reductant in the reaction, yielding dihydrofolate (DHF) as a by-product. This enzymatic reaction provides an intracellular de novo source of dTMP, an essential precursor for DNA biosynthesis. The polypeptide is Thymidylate synthase (Oenococcus oeni (strain ATCC BAA-331 / PSU-1)).